The chain runs to 347 residues: UPF0324 membrane protein Atu0671 (347 aa).

10 helical membrane passes run 15–37, 50–72, 105–127, 140–162, 172–194, 201–223, 233–250, 263–282, 287–309, and 322–344; these read LRWL…AAIL, WLGD…SLPV, AGGL…SYAA, LIAC…AIGA, AFTA…LLGL, IFAG…LGAV, LIRV…SVIH, MVPW…SFGL, LLSP…LGLS, and VIIA…ILLT.

This sequence belongs to the UPF0324 family.

The protein localises to the cell membrane. The protein is UPF0324 membrane protein Atu0671 of Agrobacterium fabrum (strain C58 / ATCC 33970) (Agrobacterium tumefaciens (strain C58)).